A 223-amino-acid polypeptide reads, in one-letter code: Uracil-DNA glycosylase (223 aa).

The active-site Proton acceptor is Asp61.

It belongs to the uracil-DNA glycosylase (UDG) superfamily. UNG family.

Its subcellular location is the cytoplasm. It carries out the reaction Hydrolyzes single-stranded DNA or mismatched double-stranded DNA and polynucleotides, releasing free uracil.. In terms of biological role, excises uracil residues from the DNA which can arise as a result of misincorporation of dUMP residues by DNA polymerase or due to deamination of cytosine. This chain is Uracil-DNA glycosylase, found in Tolumonas auensis (strain DSM 9187 / NBRC 110442 / TA 4).